Consider the following 439-residue polypeptide: Serine hydroxymethyltransferase (439 aa).

126–128 (AHV) provides a ligand contact to (6S)-5,6,7,8-tetrahydrofolate. Position 232 is an N6-(pyridoxal phosphate)lysine (lysine 232).

This sequence belongs to the SHMT family. In terms of assembly, homodimer. It depends on pyridoxal 5'-phosphate as a cofactor.

The protein resides in the cytoplasm. Its pathway is amino-acid biosynthesis; glycine biosynthesis; glycine from L-serine: step 1/1. Its function is as follows. Catalyzes the reversible interconversion of serine and glycine with a modified folate serving as the one-carbon carrier. Also exhibits a pteridine-independent aldolase activity toward beta-hydroxyamino acids, producing glycine and aldehydes, via a retro-aldol mechanism. This Staphylothermus marinus (strain ATCC 43588 / DSM 3639 / JCM 9404 / F1) protein is Serine hydroxymethyltransferase.